The sequence spans 227 residues: Cytochrome c oxidase subunit 2 (227 aa).

At 1–14 the chain is on the mitochondrial intermembrane side; that stretch reads MAHAAQMGLQDATS. Residues 15 to 45 traverse the membrane as a helical segment; it reads PIMEELISFHDHALMIIFLISFLVLYALFLT. Residues 46 to 59 lie on the Mitochondrial matrix side of the membrane; it reads LTTKLTNTNITDAQ. A helical transmembrane segment spans residues 60 to 87; the sequence is EMETVWTILPAIILVLIALPSLRILYLT. Topologically, residues 88 to 227 are mitochondrial intermembrane; it reads DEINDPSFTI…IFEMGPVFTL (140 aa). 6 residues coordinate Cu cation: His-161, Cys-196, Glu-198, Cys-200, His-204, and Met-207. Residue Glu-198 coordinates Mg(2+).

Belongs to the cytochrome c oxidase subunit 2 family. As to quaternary structure, component of the cytochrome c oxidase (complex IV, CIV), a multisubunit enzyme composed of 14 subunits. The complex is composed of a catalytic core of 3 subunits MT-CO1, MT-CO2 and MT-CO3, encoded in the mitochondrial DNA, and 11 supernumerary subunits COX4I, COX5A, COX5B, COX6A, COX6B, COX6C, COX7A, COX7B, COX7C, COX8 and NDUFA4, which are encoded in the nuclear genome. The complex exists as a monomer or a dimer and forms supercomplexes (SCs) in the inner mitochondrial membrane with NADH-ubiquinone oxidoreductase (complex I, CI) and ubiquinol-cytochrome c oxidoreductase (cytochrome b-c1 complex, complex III, CIII), resulting in different assemblies (supercomplex SCI(1)III(2)IV(1) and megacomplex MCI(2)III(2)IV(2)). Found in a complex with TMEM177, COA6, COX18, COX20, SCO1 and SCO2. Interacts with TMEM177 in a COX20-dependent manner. Interacts with COX20. Interacts with COX16. Cu cation serves as cofactor.

Its subcellular location is the mitochondrion inner membrane. It catalyses the reaction 4 Fe(II)-[cytochrome c] + O2 + 8 H(+)(in) = 4 Fe(III)-[cytochrome c] + 2 H2O + 4 H(+)(out). Functionally, component of the cytochrome c oxidase, the last enzyme in the mitochondrial electron transport chain which drives oxidative phosphorylation. The respiratory chain contains 3 multisubunit complexes succinate dehydrogenase (complex II, CII), ubiquinol-cytochrome c oxidoreductase (cytochrome b-c1 complex, complex III, CIII) and cytochrome c oxidase (complex IV, CIV), that cooperate to transfer electrons derived from NADH and succinate to molecular oxygen, creating an electrochemical gradient over the inner membrane that drives transmembrane transport and the ATP synthase. Cytochrome c oxidase is the component of the respiratory chain that catalyzes the reduction of oxygen to water. Electrons originating from reduced cytochrome c in the intermembrane space (IMS) are transferred via the dinuclear copper A center (CU(A)) of subunit 2 and heme A of subunit 1 to the active site in subunit 1, a binuclear center (BNC) formed by heme A3 and copper B (CU(B)). The BNC reduces molecular oxygen to 2 water molecules using 4 electrons from cytochrome c in the IMS and 4 protons from the mitochondrial matrix. The polypeptide is Cytochrome c oxidase subunit 2 (MT-CO2) (Symphalangus syndactylus (Siamang)).